Here is a 439-residue protein sequence, read N- to C-terminus: Glycosyl hydrolase DigH (439 aa).

The signal sequence occupies residues 1–27; that stretch reads MDICSRNEKLAIRRPAILVALALLLCS. The N-palmitoyl cysteine moiety is linked to residue C28. C28 carries the S-diacylglycerol cysteine lipid modification. A disordered region spans residues 34-54; it reads ESMVTPPAGSKPPATTQQSSQ.

This sequence belongs to the glycosyl hydrolase-like 10 (GHL10) family.

Its subcellular location is the cell outer membrane. Its function is as follows. Divisome-localized glycosyl hydrolase that cleaves peptide-free (denuded) peptidoglycans. This Escherichia coli O6:H1 (strain CFT073 / ATCC 700928 / UPEC) protein is Glycosyl hydrolase DigH.